The sequence spans 206 residues: Small ribosomal subunit protein uS4 (206 aa).

An S4 RNA-binding domain is found at 96–156 (CRLDNVVYRM…EKSSNQLRIV (61 aa)).

Belongs to the universal ribosomal protein uS4 family. Part of the 30S ribosomal subunit. Contacts protein S5. The interaction surface between S4 and S5 is involved in control of translational fidelity.

In terms of biological role, one of the primary rRNA binding proteins, it binds directly to 16S rRNA where it nucleates assembly of the body of the 30S subunit. Its function is as follows. With S5 and S12 plays an important role in translational accuracy. This chain is Small ribosomal subunit protein uS4, found in Pseudomonas putida (strain W619).